A 346-amino-acid polypeptide reads, in one-letter code: Putative D-xylulose reductase (346 aa).

Zn(2+) is bound by residues Cys-39, His-64, and Glu-150.

The protein belongs to the zinc-containing alcohol dehydrogenase family. Zn(2+) serves as cofactor.

The catalysed reaction is xylitol + NAD(+) = D-xylulose + NADH + H(+). This chain is Putative D-xylulose reductase, found in Rhizobium meliloti (strain 1021) (Ensifer meliloti).